A 372-amino-acid polypeptide reads, in one-letter code: Alginate lyase (372 aa).

The first 22 residues, 1–22 (MKTRLALPCLLGSLLLSSAVHA), serve as a signal peptide directing secretion. Residues 61 to 62 (SK), 134 to 135 (HT), and Y252 each bind substrate.

This sequence belongs to the polysaccharide lyase 5 family.

It localises to the periplasm. The enzyme catalyses Eliminative cleavage of alginate to give oligosaccharides with 4-deoxy-alpha-L-erythro-hex-4-enuronosyl groups at their non-reducing ends and beta-D-mannuronate at their reducing end.. Monovalent cations such as potassium and sodium enhance activity, as well as a combined action of these cations with magnesium. However, other cations like calcium, cobalt, manganese and zinc, or the presence of EDTA, do not affect the enzymatic activity. Functionally, catalyzes the depolymerization of alginate by cleaving the beta-1,4 glycosidic bond between two adjacent sugar residues via a beta-elimination mechanism. Degrades deacetylated polymannuronate alginate more efficiently than non-deacetylated polyM. Is able to degrade its own alginate, but at a lower efficiency than that produced from M.pyriferia and P.aeruginosa. May serve to degrade mislocalized alginate that is trapped in the periplasmic space. This Azotobacter chroococcum mcd 1 protein is Alginate lyase.